The chain runs to 298 residues: Cytochrome c oxidase subunit 2 (298 aa).

The N-terminal stretch at 1–29 (MMAIATKRRGVAAVMSLGVATMTAVPALA) is a signal peptide. Glutamine 30 is modified (pyrrolidone carboxylic acid). Residues 30–55 (QDVLGDLPVIGKPVNGGMNFQPASSP) lie on the Periplasmic side of the membrane. The helical transmembrane segment at 56-88 (LAHDQQWLDHFVLYIITAVTIFVCLLLLICIVR) threads the bilayer. Topologically, residues 89-103 (FNRRANPVPARFTHN) are cytoplasmic. A helical membrane pass occupies residues 104–134 (TPIEVIWTLVPVLILVAIGAFSLPILFRSQE). The Periplasmic segment spans residues 135 to 280 (MPNDPDLVIK…WLAGAKEEFA (146 aa)). Cu cation contacts are provided by histidine 210, cysteine 245, glutamate 247, cysteine 249, histidine 253, and methionine 256. A propeptide spans 281–298 (ADASDYLPASPVKLASAE) (C-terminal propeptide).

The protein belongs to the cytochrome c oxidase subunit 2 family. Binuclear copper center (CuA) is required as a cofactor.

It localises to the cell inner membrane. It carries out the reaction 4 Fe(II)-[cytochrome c] + O2 + 8 H(+)(in) = 4 Fe(III)-[cytochrome c] + 2 H2O + 4 H(+)(out). In terms of biological role, subunits I and II form the functional core of the enzyme complex. Electrons originating in cytochrome c are transferred via heme a and Cu(A) to the binuclear center formed by heme a3 and Cu(B). This Paracoccus denitrificans protein is Cytochrome c oxidase subunit 2 (ctaC).